We begin with the raw amino-acid sequence, 457 residues long: Streptogrisin-C (457 aa).

Positions 1–34 (MERTTLRRRALVAGTATVAVGALALAGLTGVASA) form a signal peptide, tat-type signal. A propeptide spanning residues 35 to 202 (DPAATAAPPV…ARSAEQPRAL (168 aa)) is cleaved from the precursor. A catalytic region spans residues 203 to 393 (ADIRGGDAYY…QAYGLTLVTS (191 aa)). A disulfide bond links Cys-219 and Cys-239. Active-site charge relay system residues include His-238 and Asp-266. Disulfide bonds link Cys-305-Cys-315 and Cys-341-Cys-368. Ser-347 serves as the catalytic Charge relay system. Positions 393–412 (SGGGTPTDPPTTPPTDSPGG) are disordered. The linker stretch occupies residues 394–413 (GGGTPTDPPTTPPTDSPGGT). Over residues 399 to 408 (TDPPTTPPTD) the composition is skewed to pro residues. Residues 415–457 (AVGTAYAAGATVTYGGATYRCLQAHTAQPGWTPADVPALWQRV) form the Chitin-binding type-3 domain.

This sequence belongs to the peptidase S1 family. Monomer. Predicted to be exported by the Tat system. The position of the signal peptide cleavage has not been experimentally proven.

Functionally, hydrolysis of proteins with specificity similar to chymotrypsin. May be specialized for the degradation of chitin-linked proteins. Has a primary specificity for large aliphatic or aromatic amino acids. The sequence is that of Streptogrisin-C (sprC) from Streptomyces griseus.